Reading from the N-terminus, the 1128-residue chain is Exportin-6 (1128 aa).

Residues Ile31–Ser97 enclose the Importin N-terminal domain.

It belongs to the exportin family.

The protein localises to the nucleus. Its subcellular location is the cytoplasm. Mediates the nuclear export of actin and profilin-actin complexes in somatic cells. In Danio rerio (Zebrafish), this protein is Exportin-6 (xpo6).